Consider the following 373-residue polypeptide: Dual-specificity RNA methyltransferase RlmN (373 aa).

Catalysis depends on glutamate 94, which acts as the Proton acceptor. The region spanning 100–339 (EDDRATLCVS…VIVRKTRGDD (240 aa)) is the Radical SAM core domain. Cysteine 107 and cysteine 344 form a disulfide bridge. Residues cysteine 114, cysteine 118, and cysteine 121 each contribute to the [4Fe-4S] cluster site. Residues 168–169 (GE), serine 200, 222–224 (SIH), and asparagine 301 contribute to the S-adenosyl-L-methionine site. Cysteine 344 serves as the catalytic S-methylcysteine intermediate.

This sequence belongs to the radical SAM superfamily. RlmN family. The cofactor is [4Fe-4S] cluster.

It localises to the cytoplasm. The enzyme catalyses adenosine(2503) in 23S rRNA + 2 reduced [2Fe-2S]-[ferredoxin] + 2 S-adenosyl-L-methionine = 2-methyladenosine(2503) in 23S rRNA + 5'-deoxyadenosine + L-methionine + 2 oxidized [2Fe-2S]-[ferredoxin] + S-adenosyl-L-homocysteine. It carries out the reaction adenosine(37) in tRNA + 2 reduced [2Fe-2S]-[ferredoxin] + 2 S-adenosyl-L-methionine = 2-methyladenosine(37) in tRNA + 5'-deoxyadenosine + L-methionine + 2 oxidized [2Fe-2S]-[ferredoxin] + S-adenosyl-L-homocysteine. Functionally, specifically methylates position 2 of adenine 2503 in 23S rRNA and position 2 of adenine 37 in tRNAs. m2A2503 modification seems to play a crucial role in the proofreading step occurring at the peptidyl transferase center and thus would serve to optimize ribosomal fidelity. The chain is Dual-specificity RNA methyltransferase RlmN from Shewanella amazonensis (strain ATCC BAA-1098 / SB2B).